Reading from the N-terminus, the 350-residue chain is Glyceraldehyde-3-phosphate dehydrogenase (350 aa).

NAD(+)-binding positions include 13 to 14 and Gly118; that span reads TI. 147-149 contacts D-glyceraldehyde 3-phosphate; that stretch reads SCN. The active-site Nucleophile is the Cys148. Arg176 is an NAD(+) binding site. Residue 202–203 coordinates D-glyceraldehyde 3-phosphate; that stretch reads HG. Residue Gln309 participates in NAD(+) binding. The tract at residues 327 to 350 is disordered; sequence LEEDPEASMDATDSALGVLNSPPL.

The protein belongs to the glyceraldehyde-3-phosphate dehydrogenase family. As to quaternary structure, homotetramer.

It is found in the cytoplasm. The enzyme catalyses D-glyceraldehyde 3-phosphate + phosphate + NADP(+) = (2R)-3-phospho-glyceroyl phosphate + NADPH + H(+). The catalysed reaction is D-glyceraldehyde 3-phosphate + phosphate + NAD(+) = (2R)-3-phospho-glyceroyl phosphate + NADH + H(+). It participates in carbohydrate degradation; glycolysis; pyruvate from D-glyceraldehyde 3-phosphate: step 1/5. The polypeptide is Glyceraldehyde-3-phosphate dehydrogenase (Methanopyrus kandleri (strain AV19 / DSM 6324 / JCM 9639 / NBRC 100938)).